The primary structure comprises 299 residues: 11-beta-hydroxysteroid dehydrogenase-like 4A (299 aa).

Residues 10–30 form a helical; Signal-anchor for type II membrane protein membrane-spanning segment; sequence ILLPIVTVSFLLVFMPFSIFF. NADP(+) is bound by residues 54–80 and aspartate 105; that span reads GSSSGIGEHLAYEYARRGAYLTLVARR. Serine 184 is a substrate binding site. Tyrosine 197 functions as the Proton acceptor in the catalytic mechanism. NADP(+)-binding positions include 197-201 and lysine 201; that span reads YAASK.

Belongs to the short-chain dehydrogenases/reductases (SDR) family.

The protein resides in the membrane. This Arabidopsis thaliana (Mouse-ear cress) protein is 11-beta-hydroxysteroid dehydrogenase-like 4A (HSD4).